The sequence spans 3664 residues: Msx2-interacting protein (3664 aa).

Residues 1–573 mediate DNA binding; it reads MVRETRHLWV…YAQAAVKETK (573 aa). Residues 6-81 enclose the RRM 1 domain; the sequence is RHLWVGNLPE…RDLRTDYNEP (76 aa). The disordered stretch occupies residues 70 to 89; it reads GDRDLRTDYNEPGTIPSAAR. Phosphoserine is present on serine 99. Disordered regions lie at residues 103 to 164, 183 to 209, and 225 to 330; these read EVSG…RTRH, YYAS…REQF, and TREV…EKDE. The residue at position 108 (arginine 108) is an Omega-N-methylarginine. A compositionally biased stretch (basic and acidic residues) spans 123–164; that stretch reads HAREGRYERRLDGASDNRERAYEHSAYGHHERGTGGFDRTRH. A phosphoserine mark is found at serine 188 and serine 190. Composition is skewed to basic and acidic residues over residues 192-207 and 225-237; these read NRFD…RARE and TREV…ERNY. Over residues 245-309 the composition is skewed to low complexity; that stretch reads PHSSQSRNQS…SSSDDSPARS (65 aa). Serine 309 is modified (phosphoserine). RRM domains lie at 335-415, 438-513, and 517-589; these read FGIK…IGPE, RTLF…FGKS, and NCVW…FANR. At serine 623 the chain carries Phosphoserine. A compositionally biased stretch (basic and acidic residues) spans 678-723; sequence REYRDYRNDPYEQDIREYSYRQRERERERERFESDRDRDHERRPIE. Disordered regions lie at residues 678–871, 918–941, and 957–1020; these read REYR…AKNR, QVSQ…KVPK, and RLKA…KKQP. Residues 688–715 adopt a coiled-coil conformation; sequence YEQDIREYSYRQRERERERERFESDRDR. A phosphoserine mark is found at serine 725, serine 727, serine 736, and serine 740. Basic and acidic residues predominate over residues 747 to 761; sequence LPSDSERRLYSRSSD. Positions 762-772 are enriched in low complexity; it reads RSGSCSSLSPP. Serine 770 is subject to Phosphoserine. Over residues 773-820 the composition is skewed to basic and acidic residues; it reads RYEKLDKSRLERYTKNEKTDKERTFDPERVERERRLIRKEKVEKDKTD. Phosphoserine occurs at positions 830, 833, and 847. Composition is skewed to basic and acidic residues over residues 841 to 871, 925 to 941, and 993 to 1020; these read ENER…AKNR, AKSD…KVPK, and LKAE…KKQP. The stretch at 977-1004 forms a coiled coil; it reads DLEKLEARKRRFADSNLKAEKQKPEVKK. Residue serine 1062 is modified to Phosphoserine. Residues 1070 to 1287 form a disordered region; that stretch reads ASISVGSGSR…SPRLLSVKGS (218 aa). Positions 1071–1082 are enriched in low complexity; it reads SISVGSGSRPSS. Residues 1123–1212 show a composition bias toward basic and acidic residues; the sequence is GPEREDVRKN…ERRSLVHEVG (90 aa). Position 1140 is a phosphothreonine (threonine 1140). At serine 1168 the chain carries Phosphoserine. Residues 1170-1191 adopt a coiled-coil conformation; the sequence is RKQMEQSRRKQQMEMEIAKSEK. Phosphoserine is present on residues serine 1194, serine 1222, serine 1252, serine 1261, serine 1268, serine 1278, serine 1283, serine 1287, serine 1333, serine 1380, and serine 1382. Basic and acidic residues predominate over residues 1231-1257; it reads DHVDFDICTKRERNYRSSRQISEDSER. Residues 1366–1397 form a disordered region; that stretch reads RKRSVRDLEPGEVPSDSDEDGEHKSHSPRASA. Residues 1408–1428 adopt a coiled-coil conformation; sequence LRDREDKLRERDERLSSSLER. Threonine 1439 and threonine 1441 each carry phosphothreonine. 2 coiled-coil regions span residues 1496 to 1529 and 1592 to 1612; these read KKKK…FASR and RMQQ…KQED. Disordered stretches follow at residues 1497 to 1524, 1588 to 2171, 2185 to 2532, 2566 to 2590, 2775 to 2806, and 2847 to 2875; these read KKKI…ERQE, MELT…QMEL, SASA…TSSS, PCLH…APPV, QRAS…GAGL, and FQQS…QAPA. Composition is skewed to basic and acidic residues over residues 1501 to 1524 and 1588 to 1631; these read RTDS…ERQE and MELT…DSEL. Threonine 1619 and threonine 1633 each carry phosphothreonine. Low complexity predominate over residues 1633-1646; sequence TPPSVGPPSVTVVT. The segment covering 1657–1674 has biased composition (basic and acidic residues); that stretch reads TTGDKTVEAPLVTEEKTV. Residues 1686-1695 show a composition bias toward low complexity; it reads ASEPAPAPVE. Basic and acidic residues predominate over residues 1764 to 1779; that stretch reads QKSEEANEPKAEKPDA. Over residues 1791 to 1802 the composition is skewed to low complexity; it reads AEAAPESQPPAS. Residue threonine 1826 is modified to Phosphothreonine. Composition is skewed to basic and acidic residues over residues 1839-1853 and 1861-1876; these read PVTR…EKLK and EAQK…EKIT. A phosphoserine mark is found at serine 1897 and serine 1918. The segment covering 1912–1925 has biased composition (basic and acidic residues); sequence GDHENRSPVKEPVE. Positions 1928–1944 form a coiled coil; sequence RVTRKRLERELQEAAAV. Position 1947 is a phosphothreonine (threonine 1947). Basic residues predominate over residues 1949–1958; it reads RRGRPPKTRR. 3 stretches are compositionally biased toward basic and acidic residues: residues 2000–2010, 2026–2054, and 2062–2073; these read GKNEPKVDATR, SSME…DKNP, and VVEKKPAPEKNS. 3 positions are modified to phosphoserine: serine 2101, serine 2120, and serine 2126. Basic and acidic residues-rich tracts occupy residues 2122–2132 and 2140–2153; these read EKSESPQKEDG and DPVD…KEDV. The segment at 2130 to 2464 is interaction with MSX2; sequence EDGLSSQLKS…ESDPVTPPSD (335 aa). Serine 2159 is modified (phosphoserine). Threonine 2163 bears the Phosphothreonine mark. Residues 2201–2707 enclose the RID domain; it reads EDRDKPAHQA…NVLTGPVNVL (507 aa). The segment covering 2316–2328 has biased composition (basic and acidic residues); sequence KGSKEVEVTLVRK. A compositionally biased stretch (basic residues) spans 2329-2345; that stretch reads DKGRQKTTRSRRKRNTN. Residue serine 2366 is modified to Phosphoserine. Residues 2380–2391 show a composition bias toward basic and acidic residues; the sequence is APQEEKQSEKPH. Threonine 2393 bears the Phosphothreonine mark. Polar residues predominate over residues 2394 to 2415; it reads PPQSCTSDLSKIPSTENSSQEI. Position 2421 is a phosphothreonine (threonine 2421). Over residues 2429 to 2438 the composition is skewed to pro residues; the sequence is PDLPPPPQPA. A phosphoserine mark is found at serine 2452 and serine 2456. Pro residues predominate over residues 2459-2471; that stretch reads VTPPSDPSIPIPT. Threonine 2460 is modified (phosphothreonine). Residues serine 2481, serine 2486, and serine 2493 each carry the phosphoserine modification. Residues 2577 to 2586 are compositionally biased toward basic and acidic residues; that stretch reads DSKKPLEEKT. The segment at 2709-2870 is interaction with RBPSUH; the sequence is TPVNATVGTV…VTASQPPSKG (162 aa). Residues 2847 to 2867 show a composition bias toward polar residues; sequence FQQSVSKSQVKPDSVTASQPP. A phosphothreonine mark is found at threonine 2938 and threonine 2950. Disordered regions lie at residues 2978 to 3010 and 3022 to 3047; these read LGST…IPAD and DAHS…STAS. Residues 3032–3047 are compositionally biased toward low complexity; the sequence is GPSSFPRASHPSSTAS. Asymmetric dimethylarginine is present on residues arginine 3113 and arginine 3121. 3 disordered regions span residues 3135–3156, 3208–3265, and 3327–3492; these read QRAS…QHPP, EQPR…APHG, and AASS…HLTS. Pro residues-rich tracts occupy residues 3244–3262 and 3343–3356; these read TPTP…PAPA and GPPP…PPQP. Composition is skewed to polar residues over residues 3384 to 3399 and 3417 to 3436; these read KMPQ…QTGV and TQVQ…SPVS. Phosphoserine is present on serine 3433. The 167-residue stretch at 3498 to 3664 folds into the SPOC domain; it reads MVQLLKKYPI…PHLMIVIASV (167 aa).

The protein belongs to the RRM Spen family. Interacts with MSX2 and HIPK3. Interacts with NCOR2, HDAC1, HDAC2, RBBP4, MBD3 and MTA1L1. Interacts with RBPSUH; this interaction may prevent the interaction between RBPSUH and NOTCH1. Interacts with the nuclear receptors RAR and PPARD. Interacts with RAR in absence of ligand. Binds to the steroid receptor RNA coactivator SRA. In terms of assembly, (Microbial infection) Interacts with Epstein-Barr virus BSFL2/BMLF1. As to expression, expressed at high level in brain, testis, spleen and thymus. Expressed at intermediate level in kidney, liver, mammary gland and skin.

The protein resides in the nucleus. In terms of biological role, may serve as a nuclear matrix platform that organizes and integrates transcriptional responses. In osteoblasts, supports transcription activation: synergizes with RUNX2 to enhance FGFR2-mediated activation of the osteocalcin FGF-responsive element (OCFRE). Has also been shown to be an essential corepressor protein, which probably regulates different key pathways such as the Notch pathway. Negative regulator of the Notch pathway via its interaction with RBPSUH, which prevents the association between NOTCH1 and RBPSUH, and therefore suppresses the transactivation activity of Notch signaling. Blocks the differentiation of precursor B-cells into marginal zone B-cells. Probably represses transcription via the recruitment of large complexes containing histone deacetylase proteins. May bind both to DNA and RNA. This chain is Msx2-interacting protein (SPEN), found in Homo sapiens (Human).